Reading from the N-terminus, the 64-residue chain is Protein DsrB (64 aa).

Belongs to the DsrB family.

This is Protein DsrB from Salmonella enteritidis PT4 (strain P125109).